Reading from the N-terminus, the 299-residue chain is Acetaldehyde dehydrogenase 2 (299 aa).

The Acyl-thioester intermediate role is filled by Cys-130. NAD(+) contacts are provided by residues Ser-161–Asn-169 and Asn-272.

The protein belongs to the acetaldehyde dehydrogenase family.

It catalyses the reaction acetaldehyde + NAD(+) + CoA = acetyl-CoA + NADH + H(+). The polypeptide is Acetaldehyde dehydrogenase 2 (Burkholderia lata (strain ATCC 17760 / DSM 23089 / LMG 22485 / NCIMB 9086 / R18194 / 383)).